Consider the following 199-residue polypeptide: Putative pseudouridine methyltransferase (199 aa).

2 residues coordinate S-adenosyl-L-methionine: leucine 132 and cysteine 186.

Belongs to the methyltransferase superfamily. TrmY family.

The protein localises to the cytoplasm. This chain is Putative pseudouridine methyltransferase, found in Vibrio parahaemolyticus serotype O3:K6 (strain RIMD 2210633).